Here is a 293-residue protein sequence, read N- to C-terminus: Kallikrein-5 (293 aa).

The N-terminal stretch at 1–22 (MATARPPWMWVLCALITALLLG) is a signal peptide. The segment covering 37–49 (HPSNTVPSGSNQD) has biased composition (polar residues). The disordered stretch occupies residues 37-68 (HPSNTVPSGSNQDLGAGAGEDARSDDSSSRII). Positions 67-290 (IINGSDCDMH…FTKWIQETIQ (224 aa)) constitute a Peptidase S1 domain. Residue asparagine 69 is glycosylated (N-linked (GlcNAc...) asparagine). Cystine bridges form between cysteine 73/cysteine 206, cysteine 93/cysteine 109, cysteine 178/cysteine 279, cysteine 185/cysteine 251, cysteine 217/cysteine 231, and cysteine 241/cysteine 266. Residues histidine 108 and aspartate 153 each act as charge relay system in the active site. Asparagine 173 and asparagine 208 each carry an N-linked (GlcNAc...) asparagine glycan. The active-site Charge relay system is the serine 245. The N-linked (GlcNAc...) asparagine glycan is linked to asparagine 252.

It belongs to the peptidase S1 family. Kallikrein subfamily. As to quaternary structure, interacts with SPINK9. In terms of tissue distribution, expressed in skin, breast, brain and testis. Expressed at the stratum granulosum of palmar skin.

Its subcellular location is the secreted. Inhibited by Zn2+. May be involved in desquamation. This Homo sapiens (Human) protein is Kallikrein-5.